Reading from the N-terminus, the 81-residue chain is ATP synthase subunit c (81 aa).

Helical transmembrane passes span Ile-5 to Gly-25 and Val-57 to Ala-77.

It belongs to the ATPase C chain family. In terms of assembly, F-type ATPases have 2 components, F(1) - the catalytic core - and F(0) - the membrane proton channel. F(1) has five subunits: alpha(3), beta(3), gamma(1), delta(1), epsilon(1). F(0) has three main subunits: a(1), b(2) and c(10-14). The alpha and beta chains form an alternating ring which encloses part of the gamma chain. F(1) is attached to F(0) by a central stalk formed by the gamma and epsilon chains, while a peripheral stalk is formed by the delta and b chains.

It localises to the cell membrane. F(1)F(0) ATP synthase produces ATP from ADP in the presence of a proton or sodium gradient. F-type ATPases consist of two structural domains, F(1) containing the extramembraneous catalytic core and F(0) containing the membrane proton channel, linked together by a central stalk and a peripheral stalk. During catalysis, ATP synthesis in the catalytic domain of F(1) is coupled via a rotary mechanism of the central stalk subunits to proton translocation. In terms of biological role, key component of the F(0) channel; it plays a direct role in translocation across the membrane. A homomeric c-ring of between 10-14 subunits forms the central stalk rotor element with the F(1) delta and epsilon subunits. This chain is ATP synthase subunit c, found in Mycobacterium bovis (strain ATCC BAA-935 / AF2122/97).